A 539-amino-acid chain; its full sequence is BTB/POZ domain-containing protein 6 (539 aa).

The signal sequence occupies residues 1–23 (MLLPLACLHGRVAQCLTSLLVLA). The 71-residue stretch at 137 to 207 (ADVHFIVGAL…MYSDEIDLEA (71 aa)) folds into the BTB domain.

Its subcellular location is the cytoplasm. Adapter protein for the cul3 E3 ubiquitin-protein ligase complex. Involved in late neuronal development and muscle formation. This is BTB/POZ domain-containing protein 6 (Btbd6) from Mus musculus (Mouse).